Reading from the N-terminus, the 307-residue chain is N-acetylmuramic acid 6-phosphate etherase (307 aa).

In terms of domain architecture, SIS spans 62–225; sequence IVLAFQKGAR…TTASMIRIGK (164 aa). The active-site Proton donor is the E90. E121 is a catalytic residue.

It belongs to the GCKR-like family. MurNAc-6-P etherase subfamily. Homodimer.

The catalysed reaction is N-acetyl-D-muramate 6-phosphate + H2O = N-acetyl-D-glucosamine 6-phosphate + (R)-lactate. It participates in amino-sugar metabolism; 1,6-anhydro-N-acetylmuramate degradation. It functions in the pathway amino-sugar metabolism; N-acetylmuramate degradation. Its pathway is cell wall biogenesis; peptidoglycan recycling. Specifically catalyzes the cleavage of the D-lactyl ether substituent of MurNAc 6-phosphate, producing GlcNAc 6-phosphate and D-lactate. Together with AnmK, is also required for the utilization of anhydro-N-acetylmuramic acid (anhMurNAc) either imported from the medium or derived from its own cell wall murein, and thus plays a role in cell wall recycling. This Mesorhizobium japonicum (strain LMG 29417 / CECT 9101 / MAFF 303099) (Mesorhizobium loti (strain MAFF 303099)) protein is N-acetylmuramic acid 6-phosphate etherase.